A 350-amino-acid chain; its full sequence is Probable choline kinase 2 (350 aa).

Residues Arg-73, Gln-210, and Asp-227 each contribute to the ATP site.

The protein belongs to the choline/ethanolamine kinase family.

The catalysed reaction is choline + ATP = phosphocholine + ADP + H(+). It functions in the pathway phospholipid metabolism; phosphatidylcholine biosynthesis; phosphocholine from choline: step 1/1. Involved in phospholipid biosynthesis. Catalyzes the first step in phosphatidylcholine biosynthesis. The protein is Probable choline kinase 2 of Arabidopsis thaliana (Mouse-ear cress).